The primary structure comprises 252 residues: 3-dehydroquinate dehydratase (252 aa).

3-dehydroquinate is bound by residues serine 21, 46 to 48, and arginine 82; that span reads EWR. Residue histidine 143 is the Proton donor/acceptor of the active site. The Schiff-base intermediate with substrate role is filled by lysine 170. Residues arginine 213, serine 232, and glutamine 236 each coordinate 3-dehydroquinate.

Belongs to the type-I 3-dehydroquinase family. As to quaternary structure, homodimer.

The catalysed reaction is 3-dehydroquinate = 3-dehydroshikimate + H2O. Its pathway is metabolic intermediate biosynthesis; chorismate biosynthesis; chorismate from D-erythrose 4-phosphate and phosphoenolpyruvate: step 3/7. In terms of biological role, involved in the third step of the chorismate pathway, which leads to the biosynthesis of aromatic amino acids. Catalyzes the cis-dehydration of 3-dehydroquinate (DHQ) and introduces the first double bond of the aromatic ring to yield 3-dehydroshikimate. The polypeptide is 3-dehydroquinate dehydratase (Shigella flexneri serotype 5b (strain 8401)).